A 421-amino-acid chain; its full sequence is Tyrosine--tRNA ligase (421 aa).

L-tyrosine is bound at residue Y36. Residues 41-50 (PTADSLHIGH) carry the 'HIGH' region motif. L-tyrosine-binding residues include Y170 and Q174. Positions 231–235 (KFGKS) match the 'KMSKS' region motif. K234 lines the ATP pocket. An S4 RNA-binding domain is found at 353–420 (TNIVEALIET…KKKYFMVNYQ (68 aa)).

This sequence belongs to the class-I aminoacyl-tRNA synthetase family. TyrS type 1 subfamily. As to quaternary structure, homodimer.

Its subcellular location is the cytoplasm. It carries out the reaction tRNA(Tyr) + L-tyrosine + ATP = L-tyrosyl-tRNA(Tyr) + AMP + diphosphate + H(+). In terms of biological role, catalyzes the attachment of tyrosine to tRNA(Tyr) in a two-step reaction: tyrosine is first activated by ATP to form Tyr-AMP and then transferred to the acceptor end of tRNA(Tyr). This chain is Tyrosine--tRNA ligase, found in Staphylococcus epidermidis (strain ATCC 35984 / DSM 28319 / BCRC 17069 / CCUG 31568 / BM 3577 / RP62A).